The sequence spans 432 residues: Cyclin-A2 (432 aa).

Met-1 carries the N-acetylmethionine modification. A Phosphoserine modification is found at Ser-5. Disordered stretches follow at residues 26-45 (LQED…QQPR) and 55-75 (SGNP…VAPL). Ser-55 bears the Phosphoserine mark.

The protein belongs to the cyclin family. Cyclin AB subfamily. In terms of assembly, interacts with the CDK1 and CDK2 protein kinases to form serine/threonine kinase holoenzyme complexes. Interacts with CDK1 (hyperphosphorylated form in G1 and underphosphorylated forms in S and G2). Interacts with CDK2; the interaction increases from G1 to G2. Interacts (associated with CDK2 but not with CDK1) with SCAPER; regulates the activity of CCNA2/CDK2 by transiently maintaining CCNA2 in the cytoplasm. Forms a ternary complex with CDK2 and CDKN1B; CDKN1B inhibits the kinase activity of CDK2 through conformational rearrangements. Interacts with INCA1. As to quaternary structure, (Microbial infection) Interacts with human cytomegalovirus protein UL32. Post-translationally, polyubiquitinated via 'Lys-11'-linked ubiquitin by the anaphase-promoting complex (APC/C), leading to its degradation by the proteasome. Deubiquitinated and stabilized by USP37 enables entry into S phase. Ubiquitinated during the G1 phase by the SCF(FBXO31) complex, leading to its proteasomal degradation.

The protein localises to the nucleus. The protein resides in the cytoplasm. Functionally, cyclin which controls both the G1/S and the G2/M transition phases of the cell cycle. Functions through the formation of specific serine/threonine protein kinase holoenzyme complexes with the cyclin-dependent protein kinases CDK1 or CDK2. The cyclin subunit confers the substrate specificity of these complexes and differentially interacts with and activates CDK1 and CDK2 throughout the cell cycle. The polypeptide is Cyclin-A2 (Homo sapiens (Human)).